A 381-amino-acid chain; its full sequence is Ribosomal lysine N-methyltransferase set11 (381 aa).

In terms of domain architecture, SET spans 23–224; that stretch reads PSLEFSVIPD…KGEQIFLCYG (202 aa). Tyr-223 serves as a coordination point for S-adenosyl-L-methionine.

This sequence belongs to the class V-like SAM-binding methyltransferase superfamily. RKM2 family.

It localises to the cytoplasm. The protein resides in the nucleus. Its subcellular location is the nucleolus. In terms of biological role, S-adenosyl-L-methionine-dependent protein-lysine N-methyltransferase that trimethylates 60S ribosomal protein L12 (rpl1201 and rpl1202) at 'Lys-4' and may dimethylate L12 also at 'Lys-40' and 'Lys-41'. Overexpression causes a severe growth defect. Has a role in meiosis. The protein is Ribosomal lysine N-methyltransferase set11 (set11) of Schizosaccharomyces pombe (strain 972 / ATCC 24843) (Fission yeast).